The chain runs to 571 residues: Urease subunit alpha (571 aa).

In terms of domain architecture, Urease spans 133–571; the sequence is GGIDTHVHFI…LPLTQRYFLF (439 aa). Residues His138, His140, and Lys221 each coordinate Ni(2+). Lys221 is modified (N6-carboxylysine). His223 serves as a coordination point for substrate. Ni(2+) is bound by residues His250 and His276. His324 (proton donor) is an active-site residue. Asp364 is a binding site for Ni(2+).

This sequence belongs to the metallo-dependent hydrolases superfamily. Urease alpha subunit family. In terms of assembly, heterotrimer of UreA (gamma), UreB (beta) and UreC (alpha) subunits. Three heterotrimers associate to form the active enzyme. Requires Ni cation as cofactor. Carboxylation allows a single lysine to coordinate two nickel ions.

The protein localises to the cytoplasm. It carries out the reaction urea + 2 H2O + H(+) = hydrogencarbonate + 2 NH4(+). It functions in the pathway nitrogen metabolism; urea degradation; CO(2) and NH(3) from urea (urease route): step 1/1. This Staphylococcus saprophyticus subsp. saprophyticus (strain ATCC 15305 / DSM 20229 / NCIMB 8711 / NCTC 7292 / S-41) protein is Urease subunit alpha.